Here is a 277-residue protein sequence, read N- to C-terminus: Myelin proteolipid protein (277 aa).

The Cytoplasmic portion of the chain corresponds to 2–10; sequence GLLECCARC. Residues Cys6, Cys7, and Cys10 are each lipidated (S-palmitoyl cysteine). The helical transmembrane segment at 11 to 36 threads the bilayer; that stretch reads LIGAPFASLVATGLCFFGVALFCGCG. Residues 37-59 lie on the Extracellular side of the membrane; it reads HEALTGTEQLIETYFSKNYQDYE. A helical transmembrane segment spans residues 60-88; the sequence is FLIDVIHGFQYFIYGTAAFFFLYGALLLA. Residues 89 to 151 are Cytoplasmic-facing; that stretch reads EGFYTTGAVR…LGKWLGHPDK (63 aa). S-palmitoyl cysteine attachment occurs at residues Cys109, Cys139, and Cys141. The helical transmembrane segment at 152–178 threads the bilayer; that stretch reads FVGITYVLTIIWLLVFACSAVPVYIYF. Over 179-238 the chain is Extracellular; that stretch reads NTWTTCQSIGNPTKTSASIGTLCADARMYGILPWNAFPGKVCGSNLLSICKTSEFQMTFH. 2 disulfides stabilise this stretch: Cys184–Cys228 and Cys201–Cys220. A lipid anchor (O-palmitoyl threonine) is attached at Thr199. Residues 239-268 form a helical membrane-spanning segment; that stretch reads LFIAAFVGAAATLVSLVTFIIATTYNFAVL. Residues 269–277 lie on the Cytoplasmic side of the membrane; it reads RLMGRGTKF.

The protein belongs to the myelin proteolipid protein family.

It localises to the cell membrane. Functionally, this is the major myelin protein from the central nervous system. It plays an important role in the formation or maintenance of the multilamellar structure of myelin. This chain is Myelin proteolipid protein (PLP1), found in Taeniopygia guttata (Zebra finch).